A 308-amino-acid polypeptide reads, in one-letter code: Ribosomal RNA large subunit methyltransferase F (308 aa).

This sequence belongs to the methyltransferase superfamily. METTL16/RlmF family.

The protein localises to the cytoplasm. It carries out the reaction adenosine(1618) in 23S rRNA + S-adenosyl-L-methionine = N(6)-methyladenosine(1618) in 23S rRNA + S-adenosyl-L-homocysteine + H(+). In terms of biological role, specifically methylates the adenine in position 1618 of 23S rRNA. In Salmonella agona (strain SL483), this protein is Ribosomal RNA large subunit methyltransferase F.